The chain runs to 153 residues: Regulatory protein RecX (153 aa).

Belongs to the RecX family.

The protein localises to the cytoplasm. Modulates RecA activity. The protein is Regulatory protein RecX of Pseudomonas aeruginosa (strain UCBPP-PA14).